Here is a 115-residue protein sequence, read N- to C-terminus: Probable 4-amino-4-deoxy-L-arabinose-phosphoundecaprenol flippase subunit ArnE (115 aa).

Helical transmembrane passes span 42 to 62 (PWPW…LLLL), 65 to 85 (VEVG…TLAA), and 93 to 112 (VDRR…VLLG). Residues 46–113 (LALLALGLGL…IVAGVVLLGR (68 aa)) enclose the EamA domain.

Belongs to the ArnE family. As to quaternary structure, heterodimer of ArnE and ArnF.

The protein resides in the cell inner membrane. It participates in bacterial outer membrane biogenesis; lipopolysaccharide biosynthesis. Its function is as follows. Translocates 4-amino-4-deoxy-L-arabinose-phosphoundecaprenol (alpha-L-Ara4N-phosphoundecaprenol) from the cytoplasmic to the periplasmic side of the inner membrane. The sequence is that of Probable 4-amino-4-deoxy-L-arabinose-phosphoundecaprenol flippase subunit ArnE from Pseudomonas aeruginosa (strain UCBPP-PA14).